The sequence spans 494 residues: UDP-N-acetylmuramoyl-L-alanyl-D-glutamate--L-lysine ligase (494 aa).

A UDP-N-acetyl-alpha-D-muramoyl-L-alanyl-D-glutamate-binding site is contributed by Ser-30. Position 110–116 (110–116) interacts with ATP; the sequence is GTNGKTS. Residues 152–153, Ser-179, and Arg-187 each bind UDP-N-acetyl-alpha-D-muramoyl-L-alanyl-D-glutamate; that span reads TT. Lys-219 carries the N6-carboxylysine modification. Residues 406–409 carry the L-lysine recognition motif motif; that stretch reads DNPA.

This sequence belongs to the MurCDEF family. MurE subfamily. Carboxylation is probably crucial for Mg(2+) binding and, consequently, for the gamma-phosphate positioning of ATP.

The protein resides in the cytoplasm. It carries out the reaction UDP-N-acetyl-alpha-D-muramoyl-L-alanyl-D-glutamate + L-lysine + ATP = UDP-N-acetyl-alpha-D-muramoyl-L-alanyl-gamma-D-glutamyl-L-lysine + ADP + phosphate + H(+). Its pathway is cell wall biogenesis; peptidoglycan biosynthesis. Its function is as follows. Catalyzes the addition of L-lysine to the nucleotide precursor UDP-N-acetylmuramoyl-L-alanyl-D-glutamate (UMAG) in the biosynthesis of bacterial cell-wall peptidoglycan. The protein is UDP-N-acetylmuramoyl-L-alanyl-D-glutamate--L-lysine ligase of Staphylococcus aureus (strain MW2).